The following is a 62-amino-acid chain: Defensin BmKDfsin3 (62 aa).

Residues 1-24 form the signal peptide; that stretch reads MKTIVILFVLALVFCTLEMGMVEA. Cystine bridges form between Cys-28/Cys-49, Cys-35/Cys-57, and Cys-39/Cys-59.

It belongs to the invertebrate defensin family. Type 2 subfamily. Low expression in both venom and non-venom glands (hemolymph).

Its subcellular location is the secreted. Its function is as follows. Antibacterial peptide active against Gram-positive bacteria (including S.aureus ATCC25923 (MIC=2.5 uM), M.luteus AB93113 (MIC=2.5 uM), and the antibiotic-resistant S.epidermidis PRSE P1389 (MIC=1.25 uM)), but not against Gram-negative bacteria (including E.coli and P.aeruginosa). Also blocks the currents of Kv1.1/KCNA1 (57% inhibition), Kv1.2/KCNA2 (27.5% inhibition), Kv1.3/KCNA3 (IC(50)=23.4 nM, 84.3% inhibition), KCa3.1/KCNN4/IK (15% inhibition), KCa2.3/KCNN3/SK3 (87.5% inhibition) and Kv11.1/KCNH2/ERG1 (30.4% inhibition) channels (tested at 1 uM). It inhibits potassium channel current by interacting with the pore region. The chain is Defensin BmKDfsin3 from Olivierus martensii (Manchurian scorpion).